The primary structure comprises 920 residues: Neurofibromin-A (920 aa).

In terms of domain architecture, Ras-GAP spans 63 to 291; that stretch reads NKTLPLIKDL…EKMSAYFNLI (229 aa). Disordered stretches follow at residues 344-405 and 477-508; these read KWLA…TTTA and LGPS…GASM. Positions 346–369 are enriched in polar residues; it reads LATTPSGNTPSPAISNASSAHNGK. Residues 370–405 show a composition bias toward low complexity; the sequence is SNNTTNNNNNNNNNNNNNNNNNNNNNNNSNKTTTTA. Polar residues predominate over residues 498–507; that stretch reads PTTSLQNGAS. A CRAL-TRIO domain is found at 512 to 673; sequence FDECTHMLER…TSKDFITKSY (162 aa).

Its function is as follows. Regulator of the GTPase activity of Ras, mainly RasG and RasB. The sequence is that of Neurofibromin-A (nfaA) from Dictyostelium discoideum (Social amoeba).